Reading from the N-terminus, the 153-residue chain is MQRDKIKVEIKKLSHGKSLPLPCYATMQSAGMDLYAALDDSVILNPLERLLIPTGIVIAIPNGFEGQVRPRSGLAAKHGITVLNSPGTIDSDYRGEVKVCLINLSNQPYEIKRGDRIAQILITPVPEIIWNNIEEFYAKETARNEGGFGSSGR.

Residues arginine 71–glycine 73, asparagine 84, threonine 88–aspartate 90, and lysine 98 each bind substrate.

Belongs to the dUTPase family. The cofactor is Mg(2+).

The catalysed reaction is dUTP + H2O = dUMP + diphosphate + H(+). It functions in the pathway pyrimidine metabolism; dUMP biosynthesis; dUMP from dCTP (dUTP route): step 2/2. This enzyme is involved in nucleotide metabolism: it produces dUMP, the immediate precursor of thymidine nucleotides and it decreases the intracellular concentration of dUTP so that uracil cannot be incorporated into DNA. The chain is Deoxyuridine 5'-triphosphate nucleotidohydrolase from Wolbachia pipientis subsp. Culex pipiens (strain wPip).